Here is a 236-residue protein sequence, read N- to C-terminus: 15,16-dihydrobiliverdin:ferredoxin oxidoreductase (236 aa).

It belongs to the HY2 family.

It catalyses the reaction 15,16-dihydrobiliverdin + oxidized 2[4Fe-4S]-[ferredoxin] = biliverdin IXalpha + reduced 2[4Fe-4S]-[ferredoxin] + 2 H(+). Catalyzes the two-electron reduction of biliverdin IX-alpha at the C15 methine bridge. The protein is 15,16-dihydrobiliverdin:ferredoxin oxidoreductase of Prochlorococcus marinus (strain MIT 9312).